We begin with the raw amino-acid sequence, 511 residues long: 2-isopropylmalate synthase (511 aa).

Residues 5–267 (IQIFDTTLRD…QTQINLEETK (263 aa)) enclose the Pyruvate carboxyltransferase domain. The Mn(2+) site is built by aspartate 14, histidine 202, histidine 204, and asparagine 238. Residues 391–511 (KVETLQLQFV…NTKVEEGIHS (121 aa)) are regulatory domain.

It belongs to the alpha-IPM synthase/homocitrate synthase family. LeuA type 1 subfamily. Homodimer. Mn(2+) is required as a cofactor.

The protein localises to the cytoplasm. It catalyses the reaction 3-methyl-2-oxobutanoate + acetyl-CoA + H2O = (2S)-2-isopropylmalate + CoA + H(+). Its pathway is amino-acid biosynthesis; L-leucine biosynthesis; L-leucine from 3-methyl-2-oxobutanoate: step 1/4. Catalyzes the condensation of the acetyl group of acetyl-CoA with 3-methyl-2-oxobutanoate (2-ketoisovalerate) to form 3-carboxy-3-hydroxy-4-methylpentanoate (2-isopropylmalate). This Staphylococcus saprophyticus subsp. saprophyticus (strain ATCC 15305 / DSM 20229 / NCIMB 8711 / NCTC 7292 / S-41) protein is 2-isopropylmalate synthase.